The chain runs to 213 residues: Redox-sensing transcriptional repressor Rex (213 aa).

The segment at residues 18–57 (LYYRFVNTLKSKGIDRVNSKAISEGLNIDSATIRRDFSYF) is a DNA-binding region (H-T-H motif). 92–97 (GVGNLG) provides a ligand contact to NAD(+).

The protein belongs to the transcriptional regulatory Rex family. As to quaternary structure, homodimer.

It localises to the cytoplasm. In terms of biological role, modulates transcription in response to changes in cellular NADH/NAD(+) redox state. This chain is Redox-sensing transcriptional repressor Rex, found in Staphylococcus saprophyticus subsp. saprophyticus (strain ATCC 15305 / DSM 20229 / NCIMB 8711 / NCTC 7292 / S-41).